The sequence spans 115 residues: Large ribosomal subunit protein bL20 (115 aa).

This sequence belongs to the bacterial ribosomal protein bL20 family.

Functionally, binds directly to 23S ribosomal RNA and is necessary for the in vitro assembly process of the 50S ribosomal subunit. It is not involved in the protein synthesizing functions of that subunit. In Chlorobium luteolum (strain DSM 273 / BCRC 81028 / 2530) (Pelodictyon luteolum), this protein is Large ribosomal subunit protein bL20.